A 290-amino-acid chain; its full sequence is Nucleoid occlusion protein (290 aa).

A DNA-binding region (H-T-H motif) is located at residues 153–172; the sequence is EALAQRLGKGQSTIANKLRL.

The protein belongs to the ParB family.

The protein localises to the cytoplasm. It localises to the nucleoid. Effects nucleoid occlusion by binding relatively nonspecifically to DNA and preventing the assembly of the division machinery in the vicinity of the nucleoid, especially under conditions that disturb the cell cycle. It helps to coordinate cell division and chromosome segregation by preventing the formation of the Z ring through the nucleoid, which would cause chromosome breakage. This is Nucleoid occlusion protein from Bacillus cereus (strain ATCC 10987 / NRS 248).